A 314-amino-acid polypeptide reads, in one-letter code: Beta-lactamase 2 (314 aa).

A signal peptide spans 1–26 (MLHTRIRRATLGAVAALSLVPVMACG). Residues 32–47 (DAAEPAGSAPSSSAAA) are compositionally biased toward low complexity. A disordered region spans residues 32 to 51 (DAAEPAGSAPSSSAAAHKPG). Serine 96 (acyl-ester intermediate) is an active-site residue. Residue 258 to 260 (KTG) participates in substrate binding.

The protein belongs to the class-A beta-lactamase family.

It catalyses the reaction a beta-lactam + H2O = a substituted beta-amino acid. This is Beta-lactamase 2 (blaU) from Streptomyces cacaoi.